The sequence spans 284 residues: Bifunctional protein FolD (284 aa).

Residues 163 to 165 (GRS), Ser188, and Ile229 contribute to the NADP(+) site.

The protein belongs to the tetrahydrofolate dehydrogenase/cyclohydrolase family. In terms of assembly, homodimer.

The enzyme catalyses (6R)-5,10-methylene-5,6,7,8-tetrahydrofolate + NADP(+) = (6R)-5,10-methenyltetrahydrofolate + NADPH. The catalysed reaction is (6R)-5,10-methenyltetrahydrofolate + H2O = (6R)-10-formyltetrahydrofolate + H(+). It functions in the pathway one-carbon metabolism; tetrahydrofolate interconversion. In terms of biological role, catalyzes the oxidation of 5,10-methylenetetrahydrofolate to 5,10-methenyltetrahydrofolate and then the hydrolysis of 5,10-methenyltetrahydrofolate to 10-formyltetrahydrofolate. This chain is Bifunctional protein FolD, found in Campylobacter hominis (strain ATCC BAA-381 / DSM 21671 / CCUG 45161 / LMG 19568 / NCTC 13146 / CH001A).